The primary structure comprises 360 residues: Protein Wnt-2 (360 aa).

The first 25 residues, Met-1–Ser-25, serve as a signal peptide directing secretion. 11 cysteine pairs are disulfide-bonded: Cys-76–Cys-87, Cys-127–Cys-135, Cys-137–Cys-157, Cys-206–Cys-220, Cys-208–Cys-215, Cys-278–Cys-309, Cys-294–Cys-304, Cys-308–Cys-348, Cys-324–Cys-339, Cys-326–Cys-336, and Cys-331–Cys-332. Ser-212 carries the O-palmitoleoyl serine; by PORCN lipid modification. A glycan (N-linked (GlcNAc...) asparagine) is linked at Asn-295.

Belongs to the Wnt family. Palmitoleoylation is required for efficient binding to frizzled receptors. Depalmitoleoylation leads to Wnt signaling pathway inhibition.

It localises to the secreted. The protein resides in the extracellular space. The protein localises to the extracellular matrix. In terms of biological role, ligand for members of the frizzled family of seven transmembrane receptors. Functions in the canonical Wnt signaling pathway that results in activation of transcription factors of the TCF/LEF family. Functions as a upstream regulator of FGF10 expression. Plays an important role in embryonic lung development. May contribute to embryonic brain development by regulating the proliferation of dopaminergic precursors and neurons. The sequence is that of Protein Wnt-2 (WNT2) from Loxodonta africana (African elephant).